We begin with the raw amino-acid sequence, 331 residues long: MRSIKCVIIGDGAVGKTSLLISYTTNSFPTDYVPTVFDNYSTTIAIPNGTASSPLELDNGNDKRGSLSSASSSPSTDRKLYKINLWDTAGQEDYDRLRPLCYPQTDIFLICFSVSEHASFANVTEKWLPELKQTSNIEGTSLYTKLGKYPILLVGTKSDLRDDPATQKKLQEANSDYVSQEEIDELVQRCGFMGYTECSAATQAGVREVFEQAVRYAIYEPESPNQKSANHTLTDELTTATTNTNGDKNIREQKQQPHHNNSTDSTLPKGSLQQEKEALNIKPTKKGQKDKIHEQSKSKGSKIASNNHHNKQAKPKTRNDKKKKKSKCVIL.

10-17 (GDGAVGKT) is a binding site for GTP. Residues 51–76 (ASSPLELDNGNDKRGSLSSASSSPST) are disordered. Over residues 66 to 75 (SLSSASSSPS) the composition is skewed to low complexity. Residues 87 to 91 (DTAGQ) and 156 to 159 (TKSD) each bind GTP. S223 and S228 each carry phosphoserine. T232 and T244 each carry phosphothreonine. The disordered stretch occupies residues 239-331 (TATTNTNGDK…KKKKSKCVIL (93 aa)). Residues 258–273 (HHNNSTDSTLPKGSLQ) show a composition bias toward polar residues. Residue K276 forms a Glycyl lysine isopeptide (Lys-Gly) (interchain with G-Cter in ubiquitin) linkage. The span at 287-297 (GQKDKIHEQSK) shows a compositional bias: basic and acidic residues. The segment covering 308-331 (HHNKQAKPKTRNDKKKKKSKCVIL) has biased composition (basic residues). C328 bears the Cysteine methyl ester mark. The S-geranylgeranyl cysteine moiety is linked to residue C328. Positions 329–331 (VIL) are cleaved as a propeptide — removed in mature form.

This sequence belongs to the small GTPase superfamily. Rho family. As to quaternary structure, interacts with RGD2.

Its subcellular location is the membrane. The protein localises to the mitochondrion. Small GTPase that negatively regulates a MAP kinase branch, downstream of SLT2, of the PKC1-mediated signal transduction pathway. With its specific guanine nucleotide exchange factor (GEF), the heterodimeric complex DCK1/LMO1, relocates to mitochondria upon oxidative stress and triggers cell death. The DCK1/LMO1/RHO5 signaling module that mediates mitochondrial turnover under nitrogen starvation conditions via mitophagy. The DCK1/LMO1/RHO5 signaling module also plays a role in cell wall integrity signaling. This Saccharomyces cerevisiae (strain ATCC 204508 / S288c) (Baker's yeast) protein is GTP-binding protein RHO5.